The chain runs to 556 residues: MKGKRSEAITQGFERAPHRALLMGTGIPRKELGKPLIGIATSFTDLIPGHIGMRDLERFIEKGVHTGGGYSFLFGIPGVCDGIAMGHKGMHYSLSTRELIADMVESIAEAHRLDGLVLLTNCDKITPGMLMAAARLDIPCIVVTAGPMLTGTGRGGRRYSFVTDTFEAMARYKAGEINAAELQQCEDRACPGAGSCQGLFTANTMAILTETLGMSLVGCGTALAVSSLKRQIAFASGERIVSLVREGITPRQILTREAFENAIRVDLALGGSSNTVLHLLSIAHEAEVDLPLDLFDKLSRETPQLASMNPGGKHFMEDLDAAGGVPGVLYQLRDQIHDNPTLNGVGVKQIIDSVIDVDETVIHPKEDAVRPEGGIAILTGNLTPDGAVVKQSGVSEKMMTFEGTARCFNSEEEAMQALMGGQVKAGDVVVIRYEGPKGGPGMREMLAPTATLMGLGLGDSVALITDGRFSGGTRGPCVGHVSPEAAVGGPIALVEDGDTIVLDIPSRRLEVKVSDQELAKRRERWQAPEPKIKKGWLSRYASVVTSANTGAVCKAR.

Asp-81 contributes to the Mg(2+) binding site. Residue Cys-122 participates in [2Fe-2S] cluster binding. Asp-123 and Lys-124 together coordinate Mg(2+). Lys-124 carries the N6-carboxylysine modification. Cys-196 serves as a coordination point for [2Fe-2S] cluster. Glu-444 contacts Mg(2+). The active-site Proton acceptor is the Ser-470.

The protein belongs to the IlvD/Edd family. Homodimer. Requires [2Fe-2S] cluster as cofactor. It depends on Mg(2+) as a cofactor.

It carries out the reaction (2R)-2,3-dihydroxy-3-methylbutanoate = 3-methyl-2-oxobutanoate + H2O. It catalyses the reaction (2R,3R)-2,3-dihydroxy-3-methylpentanoate = (S)-3-methyl-2-oxopentanoate + H2O. Its pathway is amino-acid biosynthesis; L-isoleucine biosynthesis; L-isoleucine from 2-oxobutanoate: step 3/4. The protein operates within amino-acid biosynthesis; L-valine biosynthesis; L-valine from pyruvate: step 3/4. Functions in the biosynthesis of branched-chain amino acids. Catalyzes the dehydration of (2R,3R)-2,3-dihydroxy-3-methylpentanoate (2,3-dihydroxy-3-methylvalerate) into 2-oxo-3-methylpentanoate (2-oxo-3-methylvalerate) and of (2R)-2,3-dihydroxy-3-methylbutanoate (2,3-dihydroxyisovalerate) into 2-oxo-3-methylbutanoate (2-oxoisovalerate), the penultimate precursor to L-isoleucine and L-valine, respectively. The chain is Dihydroxy-acid dehydratase from Syntrophotalea carbinolica (strain DSM 2380 / NBRC 103641 / GraBd1) (Pelobacter carbinolicus).